The chain runs to 449 residues: uncharacterized protein (449 aa).

13 helical membrane-spanning segments follow: residues 1–21, 26–46, 51–71, 97–117, 137–157, 178–198, 223–243, 244–264, 285–305, 310–330, 340–360, 377–397, and 425–445; these read MVAN…ILLI, IHLT…HVIT, IDYI…MVLV, LLML…PNAT, FVPI…LTLV, FKLS…TPFL, VLMA…IGES, LPVP…ALLL, LIFF…GVTA, LLAV…VFTV, IPLV…IGFA, VLPL…GTLV, and GLPV…WLMF.

This sequence belongs to the CitM (TC 2.A.11) transporter family.

The protein localises to the cell membrane. This is an uncharacterized protein from Synechocystis sp. (strain ATCC 27184 / PCC 6803 / Kazusa).